A 155-amino-acid chain; its full sequence is UPF0225 protein PC1_1977 (155 aa).

Belongs to the UPF0225 family.

The sequence is that of UPF0225 protein PC1_1977 from Pectobacterium carotovorum subsp. carotovorum (strain PC1).